A 400-amino-acid polypeptide reads, in one-letter code: AA13 family lytic polysaccharide monooxygenase A (400 aa).

An N-terminal signal peptide occupies residues 1 to 17 (MLLTVLAVVGCFTAVNG). Cu(2+) is bound at residue His-18. His-18 is modified (methylhistidine). Positions 18-247 (HGYLTIPASR…AQVYLHCADI (230 aa)) constitute a Chitin-binding type-4 domain. 7 cysteine pairs are disulfide-bonded: Cys-39–Cys-42, Cys-65–Cys-244, Cys-101–Cys-202, Cys-117–Cys-144, Cys-152–Cys-160, Cys-166–Cys-172, and Cys-180–Cys-191. His-108 lines the Cu(2+) pocket. The N-linked (GlcNAc...) asparagine glycan is linked to Asn-119. Tyr-241 serves as a coordination point for Cu(2+). The segment at 254–287 (GGTTSKSTTSTTSTTSTSRSTSTSAPTTTSSAST) is disordered. Positions 257-287 (TSKSTTSTTSTTSTSRSTSTSAPTTTSSAST) are enriched in low complexity. The CBM20 domain maps to 293 to 400 (TTQASLIPVT…TTATAAASWR (108 aa)). An N-linked (GlcNAc...) asparagine glycan is attached at Asn-379.

The protein belongs to the polysaccharide monooxygenase AA13 family. The cofactor is Cu(2+). O-mannosylated.

The protein localises to the secreted. It carries out the reaction starch + reduced acceptor + O2 = D-glucono-1,5-lactone-terminated malto-oligosaccharides + short-chain malto-oligosaccharides + acceptor + H2O.. Its activity is regulated as follows. Activity is inhibited by both beta-cyclodextrin or amylose that block the access to the active site. In terms of biological role, starch-active lytic polysaccharide monooxygenase that oxidizes the C1 position of starch substrates. Catalysis by LPMOs requires the reduction of the active-site copper from Cu(II) to Cu(I) by a reducing agent and H(2)O(2) or O(2) as a cosubstrate. This is AA13 family lytic polysaccharide monooxygenase A from Aspergillus terreus (strain NIH 2624 / FGSC A1156).